A 272-amino-acid chain; its full sequence is ATP synthase subunit delta (272 aa).

Belongs to the ATPase delta chain family. In terms of assembly, F-type ATPases have 2 components, F(1) - the catalytic core - and F(0) - the membrane proton channel. F(1) has five subunits: alpha(3), beta(3), gamma(1), delta(1), epsilon(1). F(0) has three main subunits: a(1), b(2) and c(10-14). The alpha and beta chains form an alternating ring which encloses part of the gamma chain. F(1) is attached to F(0) by a central stalk formed by the gamma and epsilon chains, while a peripheral stalk is formed by the delta and b chains.

Its subcellular location is the cell membrane. F(1)F(0) ATP synthase produces ATP from ADP in the presence of a proton or sodium gradient. F-type ATPases consist of two structural domains, F(1) containing the extramembraneous catalytic core and F(0) containing the membrane proton channel, linked together by a central stalk and a peripheral stalk. During catalysis, ATP synthesis in the catalytic domain of F(1) is coupled via a rotary mechanism of the central stalk subunits to proton translocation. Its function is as follows. This protein is part of the stalk that links CF(0) to CF(1). It either transmits conformational changes from CF(0) to CF(1) or is implicated in proton conduction. This chain is ATP synthase subunit delta, found in Corynebacterium urealyticum (strain ATCC 43042 / DSM 7109).